We begin with the raw amino-acid sequence, 87 residues long: Probable Fe(2+)-trafficking protein (87 aa).

Belongs to the Fe(2+)-trafficking protein family.

In terms of biological role, could be a mediator in iron transactions between iron acquisition and iron-requiring processes, such as synthesis and/or repair of Fe-S clusters in biosynthetic enzymes. The chain is Probable Fe(2+)-trafficking protein from Francisella philomiragia subsp. philomiragia (strain ATCC 25017 / CCUG 19701 / FSC 153 / O#319-036).